The primary structure comprises 266 residues: Translation initiation factor 2 subunit alpha (266 aa).

In terms of domain architecture, S1 motif spans 12 to 83 (GEILIATVKQ…RKGTVDVSLK (72 aa)).

It belongs to the eIF-2-alpha family. Heterotrimer composed of an alpha, a beta and a gamma chain.

In terms of biological role, eIF-2 functions in the early steps of protein synthesis by forming a ternary complex with GTP and initiator tRNA. The polypeptide is Translation initiation factor 2 subunit alpha (Saccharolobus islandicus (strain Y.N.15.51 / Yellowstone #2) (Sulfolobus islandicus)).